Here is a 2115-residue protein sequence, read N- to C-terminus: Non-reducing polyketide synthase ascC (2115 aa).

The interval 1-21 is disordered; that stretch reads MTLIQTKHSASAAVFSPQSTA. Residues 14–260 are N-terminal acylcarrier protein transacylase domain (SAT); that stretch reads VFSPQSTAPK…HNSRNTELAQ (247 aa). Positions 381-805 constitute a Ketosynthase family 3 (KS3) domain; sequence PDSIAIVGSA…GSNSALICSE (425 aa). Active-site for beta-ketoacyl synthase activity residues include Cys553, His689, and His728. The malonyl-CoA:ACP transacylase (MAT) domain stretch occupies residues 908–1210; sequence LTFSGQSRTT…ANPSAHTFQA (303 aa). The active-site For acyl/malonyl transferase activity is Ser995. The segment at 1280–1406 is N-terminal hotdog fold; sequence PKKVQQLVTL…GDFFATSGEM (127 aa). The 302-residue stretch at 1280 to 1581 folds into the PKS/mFAS DH domain; sequence PKKVQQLVTL…FMRIKAAKLE (302 aa). The interval 1285–1580 is product template (PT) domain; the sequence is QLVTLKKTEG…QFMRIKAAKL (296 aa). The active-site Proton acceptor; for dehydratase activity is His1315. The segment at 1428-1581 is C-terminal hotdog fold; the sequence is DAERLRTATA…FMRIKAAKLE (154 aa). Asp1492 functions as the Proton donor; for dehydratase activity in the catalytic mechanism. The segment at 1587–1624 is disordered; the sequence is ANPGSKTKSTNGNALPSVPRSVPAGPTSAPQQVAPTTM. Over residues 1588 to 1600 the composition is skewed to polar residues; that stretch reads NPGSKTKSTNGNA. The region spanning 1640 to 1724 is the Carrier domain; sequence PSKIADLKSL…PTAALTEGLV (85 aa). The residue at position 1674 (Ser1674) is an O-(pantetheine 4'-phosphoryl)serine. Residues 1734-1748 show a composition bias toward polar residues; sequence SDSIRNSTGFHTTIP. Residues 1734–1767 form a disordered region; the sequence is SDSIRNSTGFHTTIPATPAELHSNPPDSLDGSTV. Positions 1777 to 2107 are thioesterase (TE) domain; that stretch reads ARFKLDTMVY…YDFLLGELEN (331 aa). Active-site for thioesterase activity residues include Ser1897 and Asp2045.

The enzyme catalyses 3 malonyl-CoA + acetyl-CoA + 2 H(+) = orsellinate + 3 CO2 + 4 CoA. It participates in secondary metabolite biosynthesis; terpenoid biosynthesis. In terms of biological role, non-reducing polyketide synthase; part of the asc-1 gene cluster that mediates the biosynthesis of both ascochlorin and ascofuranone, a strong inhibitor of cyanide-insensitive alternative oxidases and a promising drug candidate against African trypanosomiasis. The first step in the pathway is performed by the non-reducing polyketide synthase ascC that produces orsellinic acid by condensing acetyl-CoA with 3 malonyl-CoA units. Orsellinic acid is then prenylated by the prenyltransferase ascA to yield ilicicolinic acid B. Ilicicolinic acid B is further reduced to ilicicolin B by the reductase ascB. The halogenase ascD then chlorinates ilicicolin B to produce ilicicolin A which is converted to ilicicolin A epoxide by the cytochrome P450 monooxygenase ascE that catalyzes stereoselective epoxidation of the terminal double bond of the prenyl group. Ilicicolin A epoxide is the last common precursor for the biosynthesis of ascofuranone and ascochlorin. The terpene cyclase ascF produces a monocyclic terpene, and the cyclization reaction is proposed to be initiated by protonation of the terminal epoxide of ilicicolin A epoxide to generate a monocyclic tertiarycation, which is followed by a series of hydride and methyl shifts with abstraction of proton, leading to the formation of the (14S,15R,19R)-trimethylcyclohexanone ring structure of ilicicolin C, which is finally reduced to ascochlorin by the dehydrogenase ascG. On the other hand, ilicicolin A epoxide is hydroxylated by the cytochrome P450 monooxygenase ascH, and the resultant product is cyclized by the terpene cyclase ascI to ascofuranol via protonation-initiated epoxide ring opening, which facilitates the 6-endo-tet cyclization to form the tetrahy-drofuran ring. Finally, ascofuranol is oxidized into ascofuranone by ascJ. This chain is Non-reducing polyketide synthase ascC, found in Acremonium egyptiacum (Oospora egyptiaca).